Reading from the N-terminus, the 208-residue chain is Uridine kinase (208 aa).

Residue 12-19 participates in ATP binding; the sequence is GGSGGGKT.

It belongs to the uridine kinase family.

The protein localises to the cytoplasm. It catalyses the reaction uridine + ATP = UMP + ADP + H(+). It carries out the reaction cytidine + ATP = CMP + ADP + H(+). It participates in pyrimidine metabolism; CTP biosynthesis via salvage pathway; CTP from cytidine: step 1/3. Its pathway is pyrimidine metabolism; UMP biosynthesis via salvage pathway; UMP from uridine: step 1/1. The polypeptide is Uridine kinase (Streptococcus pyogenes serotype M18 (strain MGAS8232)).